Here is a 1319-residue protein sequence, read N- to C-terminus: Uromodulin-like 1 (1319 aa).

A signal peptide spans 1-22 (MMSRTVRLVLLALACTVDLSQA). Over 23-1273 (SGFTENGLSL…CTKPVLGTGY (1251 aa)) the chain is Extracellular. The region spanning 34–107 (SYQLCSYPVT…FEQLGLYCVL (74 aa)) is the EMI domain. 3 cysteine pairs are disulfide-bonded: Cys-38-Cys-95, Cys-62-Cys-71, and Cys-94-Cys-105. Asn-90 carries N-linked (GlcNAc...) asparagine glycosylation. N-linked (GlcNAc...) asparagine glycosylation is present at Asn-110. A WAP domain is found at 115 to 159 (FASRPGVCPTAEAEPLSPSCSLDTDCSGLQKCCSWPGGRHCVSPT). Residues Asn-172, Asn-193, and Asn-243 are each glycosylated (N-linked (GlcNAc...) asparagine). In terms of domain architecture, EGF-like 1; calcium-binding spans 265 to 306 (DVNECLHSELQACSVREQCRNLEGSYQCVSSQRLNHTDEDCP). 2 disulfides stabilise this stretch: Cys-269–Cys-283 and Cys-277–Cys-292. Residues 307–391 (PIRDFVALNV…ATLVVKTDAQ (85 aa)) enclose the Fibronectin type-III 1 domain. Asn-315 is a glycosylation site (N-linked (GlcNAc...) asparagine). Residues 389–503 (DAQVFQVTIR…QRTFVQDWDE (115 aa)) enclose the SEA 1 domain. One can recognise an EGF-like 2; calcium-binding domain in the interval 500–545 (DWDECAHSSEHDCHPSARCINLEGSYTCQCLTARDASPSRAGRVCE). 3 cysteine pairs are disulfide-bonded: Cys-504–Cys-518, Cys-512–Cys-527, and Cys-529–Cys-544. 2 disordered regions span residues 569 to 649 (TGIT…ITKD) and 664 to 703 (HSSP…PESP). A compositionally biased stretch (low complexity) spans 619-632 (TGQGQTHGTHQGTT). The segment covering 638–647 (TTRESQELIT) has biased composition (basic and acidic residues). A compositionally biased stretch (polar residues) spans 664–678 (HSSPTWKTPPNSTRL). Residues 709–795 (PIGKVTVSNV…QLKVRTVAQK (87 aa)) form the Fibronectin type-III 2 domain. Residues Asn-717 and Asn-757 are each glycosylated (N-linked (GlcNAc...) asparagine). The SEA 2 domain maps to 792–904 (VAQKLAGNVR…GKTFMQDYNE (113 aa)). Residues 901 to 945 (DYNECDMKEDDCAPGTCRNTFGSFTCSCDEGGPDSQVEYSGRSCD) enclose the EGF-like 3; calcium-binding domain. Disulfide bonds link Cys-905–Cys-917, Cys-912–Cys-926, and Cys-928–Cys-944. A disordered region spans residues 939–966 (YSGRSCDGDPSGNMTQTPGSEWSPTPAG). A compositionally biased stretch (polar residues) spans 950–961 (GNMTQTPGSEWS). An N-linked (GlcNAc...) asparagine glycan is attached at Asn-951. The region spanning 995–1238 (SCEIETVIIT…NSCRISCNDF (244 aa)) is the ZP domain. An intrachain disulfide couples Cys-1160 to Cys-1218. The helical transmembrane segment at 1274 to 1294 (IILLAAAALLVVAGATTLLIL) threads the bilayer. Residues 1295–1319 (RYQRVRQKYNLRIQTDDFSYQVFSQ) lie on the Cytoplasmic side of the membrane.

It is found in the cell membrane. The protein is Uromodulin-like 1 (Umodl1) of Mus musculus (Mouse).